The chain runs to 444 residues: Aspartate--tRNA(Asp/Asn) ligase (444 aa).

Glu176 is a binding site for L-aspartate. Positions 198–201 are aspartate; the sequence is QLFK. Arg220 provides a ligand contact to L-aspartate. ATP-binding positions include 220 to 222, 228 to 230, and Glu367; these read RAE and RHL. The Mg(2+) site is built by Glu367 and Ser370. Residues Ser370 and Arg374 each contribute to the L-aspartate site. 415–418 is an ATP binding site; the sequence is GCER.

This sequence belongs to the class-II aminoacyl-tRNA synthetase family. Type 2 subfamily. Homodimer. Mg(2+) is required as a cofactor.

The protein resides in the cytoplasm. The enzyme catalyses tRNA(Asx) + L-aspartate + ATP = L-aspartyl-tRNA(Asx) + AMP + diphosphate. Aspartyl-tRNA synthetase with relaxed tRNA specificity since it is able to aspartylate not only its cognate tRNA(Asp) but also tRNA(Asn). Reaction proceeds in two steps: L-aspartate is first activated by ATP to form Asp-AMP and then transferred to the acceptor end of tRNA(Asp/Asn). This chain is Aspartate--tRNA(Asp/Asn) ligase, found in Methanosarcina barkeri (strain Fusaro / DSM 804).